A 1217-amino-acid polypeptide reads, in one-letter code: Myosin-1 (1217 aa).

Positions 1-26 are disordered; sequence MAILKRTNRAKAATAAAPNSTGKSNG. Over residues 10-19 the composition is skewed to low complexity; the sequence is AKAATAAAPN. ATP is bound by residues 17 to 24 and 133 to 140; these read APNSTGKS and GESGAGKT. A Myosin motor domain is found at 40–720; the sequence is VGVDDLTLLS…TLFALEDMRD (681 aa). Serine 361 carries the phosphoserine modification. Tyrosine 363 is subject to Phosphotyrosine. An actin-binding region spans residues 409-491; it reads SIGILDIYGF…PGLFAAMNDA (83 aa). 2 consecutive IQ domains span residues 724–744 and 745–770; these read DTMA…RSEA and AACI…EGTK. The residue at position 742 (serine 742) is a Phosphoserine. Residues 778–964 enclose the TH1 domain; sequence RRRYSILGSR…TIHVGTGLPP (187 aa). A Phosphoserine modification is found at serine 782. The segment at 961–1105 is disordered; sequence GLPPTSKSKP…PPPPPPPAEV (145 aa). Residues 998 to 1013 are compositionally biased toward low complexity; that stretch reads KPVSMPAAKSKPAPMA. Residues 1015 to 1025 show a composition bias toward polar residues; it reads PVSTAQQTQNR. Positions 1045–1075 are enriched in low complexity; the sequence is TSTTTTIKQATTVSASKPAPSTVTSAASSPS. A compositionally biased stretch (polar residues) spans 1076–1088; that stretch reads NISKPSAPVANNV. Pro residues predominate over residues 1093 to 1103; that stretch reads AVPPPPPPPPA. The SH3 domain occupies 1106-1165; it reads EKKDLYLALYDFAGRSPNEMTIKKDEIIEIVQKEPSGWWLALKNGAEGWVPATYVTEYKG. Serine 1211 is subject to Phosphoserine.

It belongs to the TRAFAC class myosin-kinesin ATPase superfamily. Myosin family. Interacts with cam2. Interacts (via SH3 domain) with vrp1. In terms of processing, phosphorylation of the TEDS site (Ser-361) is required for the polarization of the actin cytoskeleton. Phosphorylation probably activates the myosin-I ATPase activity.

The protein resides in the cytoplasm. It localises to the cytoskeleton. It is found in the actin patch. Functionally, type-I myosin implicated in the organization of the actin cytoskeleton. Required for proper actin cytoskeleton polarization. At the cell cortex, assembles in patch-like structures together with proteins from the actin-polymerizing machinery and promotes actin assembly. Functions as actin nucleation-promoting factor (NPF) for the Arp2/3 complex. Contributes to proper septation by transporting vesicles containing septal material to the division site and is involved in the formation of sterol-rich membrane domains at the cell division site. Required also for mating. The chain is Myosin-1 (myo1) from Schizosaccharomyces pombe (strain 972 / ATCC 24843) (Fission yeast).